We begin with the raw amino-acid sequence, 281 residues long: Glyceraldehyde dehydrogenase medium chain (281 aa).

The 176-residue stretch at M1–G176 folds into the FAD-binding PCMH-type domain. FAD is bound by residues A31–S35 and T110–A114.

Heterotrimer composed of a large chain (CutA), a medium chain (CutB) and a small chain (CutC). FAD is required as a cofactor.

It is found in the cytoplasm. It carries out the reaction D-glyceraldehyde + A + H2O = (R)-glycerate + AH2 + H(+). Component of the glyceraldehyde dehydrogenase which is involved the nonphosphorylated Entner-Doudoroff pathway. Catalyzes the oxidation of D-glyceraldehyde to yield glycerate. When the artificial electron acceptor 2,6-dichlorophenol-indophenol (Cl2Ind) is used, the enzyme shows a broad substrate range (glyceraldehyde-3-phosphate, formaldehyde, acetaldehyde, propionaldehyde and isobutyraldehyde), but is most active with D-glyceraldehyde. It is not known which acceptor is utilized in vivo. The chain is Glyceraldehyde dehydrogenase medium chain (cutB) from Sulfolobus acidocaldarius (strain ATCC 33909 / DSM 639 / JCM 8929 / NBRC 15157 / NCIMB 11770).